An 80-amino-acid polypeptide reads, in one-letter code: Serine palmitoyltransferase small subunit A-A (80 aa).

Residues 1–21 lie on the Cytoplasmic side of the membrane; sequence MKVLCEDVNGPRSSLGRAWSH. Residues 22-38 traverse the membrane as a helical segment; the sequence is MSWLYYQYLLVTALYML. Over 39–43 the chain is Lumenal; that stretch reads EPWER. Residues 44–66 form a helical membrane-spanning segment; it reads TVFNSMLVSIVGMALYTGYIFMP. Over 67–80 the chain is Cytoplasmic; the sequence is QHILAILHYFEIVQ.

The protein belongs to the SPTSS family. SPTSSA subfamily. Component of the serine palmitoyltransferase (SPT) complex, which is composed of SPTLC1, SPTLC2 or SPTLC3 and SPTSSA or SPTSSB. The heterodimer consisting of SPTLC1 and SPTLC2/SPTLC3 forms the catalytic core of the enzyme, while SPTSSA or SPTSSB subunits determine substrate specificity. SPT also interacts with ORMDL proteins, especially ORMDL3, which negatively regulate SPT activity in the presence of ceramides.

It is found in the endoplasmic reticulum membrane. It functions in the pathway lipid metabolism; sphingolipid metabolism. Functionally, component of the serine palmitoyltransferase multisubunit enzyme (SPT) that catalyzes the initial and rate-limiting step in sphingolipid biosynthesis by condensing L-serine and activated acyl-CoA (most commonly palmitoyl-CoA) to form long-chain bases. The SPT complex is composed of SPTLC1, SPTLC2 or SPTLC3 and SPTSSA or SPTSSB. Within this complex, the heterodimer consisting of SPTLC1 and SPTLC2/SPTLC3 forms the catalytic core. Within the SPT complex, SPTSSA stimulates the catalytic activity and plays a role in substrate specificity, which depends upon the overall complex composition. The SPTLC1-SPTLC2-SPTSSA complex shows a strong preference for C16-CoA substrate, while the SPTLC1-SPTLC3-SPTSSA isozyme uses both C14-CoA and C16-CoA as substrates, with a slight preference for C14-CoA. Independently of its action as a SPT component, may be involved in MBOAT7 localization to mitochondria-associated membranes, a membrane bridge between the endoplasmic reticulum and mitochondria, may hence affect MBOAT7-catalyzed incorporation of arachidonic acid into phosphatidylinositol. This is Serine palmitoyltransferase small subunit A-A (sptssa-a) from Xenopus laevis (African clawed frog).